The primary structure comprises 358 residues: Peptide chain release factor 1 (358 aa).

Gln233 carries the N5-methylglutamine modification.

The protein belongs to the prokaryotic/mitochondrial release factor family. Post-translationally, methylated by PrmC. Methylation increases the termination efficiency of RF1.

It localises to the cytoplasm. Peptide chain release factor 1 directs the termination of translation in response to the peptide chain termination codons UAG and UAA. In Staphylococcus epidermidis (strain ATCC 35984 / DSM 28319 / BCRC 17069 / CCUG 31568 / BM 3577 / RP62A), this protein is Peptide chain release factor 1.